We begin with the raw amino-acid sequence, 194 residues long: Glycerol-3-phosphate acyltransferase (194 aa).

Helical transmembrane passes span 2-22, 52-72, 80-100, 112-132, 137-157, and 161-181; these read AFFC…GVWI, LGVA…YIAS, DLVI…FISF, VFLF…ILVA, YVSL…FFTH, and YLFA…KTNI.

This sequence belongs to the PlsY family. Probably interacts with PlsX.

It localises to the cell inner membrane. It carries out the reaction an acyl phosphate + sn-glycerol 3-phosphate = a 1-acyl-sn-glycero-3-phosphate + phosphate. The protein operates within lipid metabolism; phospholipid metabolism. Catalyzes the transfer of an acyl group from acyl-phosphate (acyl-PO(4)) to glycerol-3-phosphate (G3P) to form lysophosphatidic acid (LPA). This enzyme utilizes acyl-phosphate as fatty acyl donor, but not acyl-CoA or acyl-ACP. This chain is Glycerol-3-phosphate acyltransferase, found in Fusobacterium nucleatum subsp. nucleatum (strain ATCC 25586 / DSM 15643 / BCRC 10681 / CIP 101130 / JCM 8532 / KCTC 2640 / LMG 13131 / VPI 4355).